The following is a 429-amino-acid chain: Apolipoprotein A-IV (429 aa).

Positions 1-20 (MFLKAVVLTLALVAVTGARA) are cleaved as a signal peptide. 13 repeat units span residues 33–54 (DYFSQLSSNAKEAVEHLQKSEL), 60–81 (ALFQDKLGEVNTYAGDLQKKLV), 82–103 (PFATELHERLAKDSEKLKEEIR), 115–136 (PHANEVSQKIGENVRELQQRLE), 137–158 (PYTDQLRTQVNTQTEQLRRQLT), 159–180 (PYAQRMERVLRENADSLQTSLR), 181–202 (PHADQLKAKIDQNVEELKERLT), 203–224 (PYADEFKVKIDQTVEELRRSLA), 225–246 (PYAQDAQEKLNHQLEGLAFQMK), 247–268 (KNAEELKARISASAEELRQRLA), 269–286 (PLAEDMRGNLRGNTEGLQ), 287–308 (KSLAELGGHLDRHVEEFRLRVE), and 309–330 (PYGENFNKALVQQMEQLRQKLG). The segment at 33–330 (DYFSQLSSNA…QMEQLRQKLG (298 aa)) is 13 X 22 AA approximate tandem repeats. The tract at residues 359–429 (KEKESQDNTL…QVQMLAPLES (71 aa)) is disordered. Residues 381–420 (QEQQQEQEQEQQQQQEQQQQQEQQREQQQQEQQQEQQQEQ) show a composition bias toward low complexity.

This sequence belongs to the apolipoprotein A1/A4/E family. As to quaternary structure, homodimer. In terms of processing, phosphorylation sites are present in the extracellular medium. Secreted in plasma.

The protein resides in the secreted. May have a role in chylomicrons and VLDL secretion and catabolism. Required for efficient activation of lipoprotein lipase by ApoC-II; potent activator of LCAT. Apoa-IV is a major component of HDL and chylomicrons. In Macaca fascicularis (Crab-eating macaque), this protein is Apolipoprotein A-IV (APOA4).